A 438-amino-acid polypeptide reads, in one-letter code: Zinc finger protein 641 (438 aa).

The interval 1–53 (MQAEDRSQFGSAAEMLSEQTAALGTGWESMNVQLDGAEPQVERGSQEERPWRT) is disordered. Positions 17–32 (SEQTAALGTGWESMNV) are enriched in polar residues. Residues 40–51 (QVERGSQEERPW) are compositionally biased toward basic and acidic residues. Residues 109–181 (VTIKDVSLCF…DPQDLEERDI (73 aa)) form the KRAB domain. The interval 171–265 (PDPQDLEERD…EMDSLLRPHT (95 aa)) is transactivation. Ser191 bears the Phosphoserine mark. 3 consecutive C2H2-type zinc fingers follow at residues 264–286 (HTCP…QQTH), 292–314 (YSCL…QKTH), and 320–342 (SRCS…QRVH). Positions 345 to 367 (GKSCKGQEVGESPGTRKRQRAPP) are disordered. 2 consecutive C2H2-type zinc fingers follow at residues 372–394 (HVCT…WLTH) and 400–422 (FQCP…LLTH). The disordered stretch occupies residues 418–438 (HLLTHQGQSPRNSWDRGTSVF). The segment covering 422 to 438 (HQGQSPRNSWDRGTSVF) has biased composition (polar residues). At Ser426 the chain carries Phosphoserine.

It belongs to the krueppel C2H2-type zinc-finger protein family. As to expression, highly expressed in skeletal muscle, moderate expression in heart, liver, and pancreas, lower expression in placenta, no expression seen in brain, lung, and kidney.

The protein localises to the nucleus. Functionally, transcriptional activator. Activates transcriptional activities of SRE and AP-1. The protein is Zinc finger protein 641 (ZNF641) of Homo sapiens (Human).